The following is a 712-amino-acid chain: Golgin candidate 3 (712 aa).

Positions aspartate 23 to phenylalanine 49 are disordered. Residues asparagine 36–phenylalanine 49 are compositionally biased toward polar residues. Positions alanine 65–arginine 134 form a coiled coil. Residues glycine 135–asparagine 150 are compositionally biased toward polar residues. Disordered stretches follow at residues glycine 135–phenylalanine 176 and glutamate 306–serine 347. Coiled-coil stretches lie at residues glutamine 197–serine 313, glycine 340–methionine 558, and leucine 659–alanine 690. A compositionally biased stretch (basic and acidic residues) spans serine 328–methionine 344. The GRIP domain maps to arginine 557–alanine 608. Residues glutamate 666–arginine 712 form a disordered region. Residues alanine 678–glutamate 695 show a composition bias toward basic and acidic residues. A compositionally biased stretch (polar residues) spans phenylalanine 696–arginine 712.

As to quaternary structure, interacts with ARF1; preferentially with the active form of the protein.

The protein resides in the golgi apparatus. The protein localises to the endosome. Functionally, golgi matrix protein playing a role in tethering of vesicles to Golgi membranes and in maintaining the overall structure of the Golgi apparatus. The chain is Golgin candidate 3 (GC3) from Arabidopsis thaliana (Mouse-ear cress).